The primary structure comprises 2967 residues: MSSPLKFPFKQQQQQQQQQRSRIGGDDIMNKLENEKYIVKQLFEQLLGYDNNSSFSNSNNLRITNQINNLFNGNYDPTEQDRFIIKNFTKIHEIILLLKDEEISSFIKIKILDQLIQILSYSSNNTINLIQSTSPINNNNNRKSKTLYTNKSLVILDELIQMLPSIDNEQISLKTLQLIEILGTEHITVKQLRKLLKLFDRNYLLTNFKPNHYFLQNGLPNLMKSLDVMTFRKAPSSVFYMNGINSGLIVDPIGKISTSGYTISTWINIESFQHESEFIRSYEPRLFSFLNDGGSAGIEGYFENSKFVIRINEKVKAIVNLNNNNNNNNNNNNNNNNNNNNNNNNNNNNNNNNNNNNNNSSSNSDFPTNKWCHLLVTQSPKKWGLYPGNTTLNIYLDGKLVHTQQIKYPSTSKNLNICSIGTVPSGSVPSNNSGFTYISSPSSPFSLSSSSSGGNNQSECCLKCQMGSFSMLSTFYDNSDVQDLFRKGSNYILKKQKNVQFTFSPKSFYGGVCHGLGNRELDNSINAFSIGDLKIFSTFSIKDSIYLIGGPQIIFPLLQAIEDQFKFITPITLSPNLLSSSSSSSSSILSIDPNNNNNNNNNNNNNIQQPQQQQLQLNEEETINTNNNIKLTSSQSTDNIVVFNGSQEDINQLSKLINYPRISSILRFITHLLINDKYNQKELIGSNGLSLLGYLISNIFSNSDSNPSHPYNFKTLEREEFDLIFDALDQLTDFSLVDKNPLLKLNIYKEIIFNFNIWVHIKKEYQIQLFNLIIFKVSQNPQYFRENIKVRYLLDCIKYFYHINENTIISTNNNNNNNNIGESSGANNNNNNNNNNTNNVGNCRLNCHLSNQDLKEIISYIFDIIKIIIKPILNEKEVPEIQEIIKFIQDSECNSTVIKESLMILLSNLFLPVNNNNNSNNNNNNNNSNSNNNNINIGGDEKFQNYDTIKGFLNSFESSGDIKSLLGLLKHNNEQVQVLVIKIIGKYMGGSEGLSMASSGNVRRSLKLKNTLTDVLYFITDQLMEFEMTELMYRGLSEIVVDEITPSIADTPNSPLLELLGSETLLADSISSVNIMGGSNNNNNNNNNNSNNNKDKIDSNNKDKDSKEKRIINIAALETICRLAIRAPLALQQKILNEILLCIKHLPQMRAGILDSENWQHWLLSLWPQPRSNTSSPPWSPPISPLLTSTKSMSPSPPPPPPLSSSSYQQQQQNIISDHRSQTKEQLSIRAYQSGIKEILTGIMKVLLFDCINKKDGWKFIEETEAWIFSILPNGVPLERRIFYECLLNLERGLKSSNHDPTTGGILLKNYVNLVSIIEDFVFSHTMNILAHRNTQSQWEDFGVVAKLLDIFDISQSIQTIRIQANVVKPTASSSLNPFSSNHSNYQSPYGSMQFSPYIMTLANNSGTIDLPSIDVTSGSAKAKSSIHTIYRLCLCIFQEAESCFYGERESYHQSKHDHTNENADDEERQFSIRVWGLPMISEDMDHIISKNSIRIQTILASERDQKEQVKHVMWIVCSLITIIRRHKTNNEDKIIINTQSIIISLLKQLLKTYGDLIDNFINPPSNILSPIINSVVGGGNNNNNSGNNNSGNNINNNNNNNNNNTNLNNNENEKTSFSVHSISSLNEKTDLINHPEFLKYFNDKLLPKITLLDKLHEIKDHYENAHLQSAFTMTRRNKVLEAINSNYQKHQNVITYKINKLLTKSISTSQKYEFQEIQRKSDFQEYIQQYNQYIIDLWNTKFKQLTQQESSPWFQMEPNHNEKTIWRLYNISNSNRVNILMKKDYDGTDHPEASLSNQKILRQQQLRMEQQQQLRLEQQQQKLQQQQQQQQQQQQSQQSLQLPPSPSISNAGSSSSVVEQLKNNPILRKVTKHTTSTDSLGNDTLVGFEIEEKDDDGNNIILDDEHESEWCLVDEKIMKPQKTPQNQHQQQQAQQQHQQQQQQHQFKRSTSLSANQTLLNTSSTSSLSSSSSPSSSFSNIQTVTNSGGGGTNIITTTTTTTTTSTLNNDRVNSNFNLFEQLNLLNPKKSTLTSSSSSSPSSNNNNGNSNNNSNNNNNNNKNIKLEFSTQGEIIKPMSVIRIKLQIFTDRLILTSNLIQEDDCIPPKYLKDREYEIKKIIGVQCRRYLLSPTALEFFFIDRKSLLVNFPRGSICAQILKLIGNLYGSNDIIFKINTNNVSFFDGTIGANNSTNNSNSNQPMTPQQVVIKYLNPTARWKRREISNFEYLMTLNTIAGRTYNDLNQYPVFPWIIGDNSSNTLNINDQSIYRDLSKPIGALNPTRLELFMERWTQCPAEIPAFMYGTHYSSSGSVMFFLMRCEPFTSHFIKLQSGHFDHADRMFDSIIDCWRNCLNSSSDVKELTPEFFYLPEFLINRNRVEFGVKQNGKALDNVSLPPWAQQSPYHFIMLNRMALESEYVSMNLHHWIDLIFGYKQRGKEAVKANNVFYHLTYEGSVDIGAMNDPILREATRVQINNFGVTPSQLFPNQPHPQRDPLPQRYSNKLDIFKRLKPLQLISLPFSPLCIFVYCPTKSDYYSGGIGSSLISGVVGNSSSANSLLGDRVLLIGEANNDLQYYRYLESTSTISTQTSTNLVSQSVQPLPSNANQPITLSSGLRSVIGKPFCQIPSNSRVLLTSGKCDYTLHIVHGEGSKLVTGSINHKSPITCIVYDEYQCGRLGVGGVLIEQKVIVTGSDDSTAIVWEYEQSQSDHHSIKPIHILRGHNFGITCIAINKANDICLTASKDGKVNVHSLKKGTFFKSIQHPNKLPIHSIILENDSSTFFIYSNSILPIVQSDYNSSATTTTTTRDDESSSSSLSSSNTTISNNNVLYRYSINGDLIQSVQNDVQPIIVKMLITKSQNGIRYLLTAGGYQIVIREMLNLEIVHVFDIRDLSGFTNSNKIVDIYLWGGDESYQKPSTSVSGDSNSNNNNNNNGNNTINNNLTLMVPLESCQLLIYSFDEFGNLKSLD.

10 disordered regions span residues 1–25 (MSSPLKFPFKQQQQQQQQQRSRIGG), 322–364 (NNNN…SSNS), 588–615 (ILSIDPNNNNNNNNNNNNNIQQPQQQQL), 917–936 (NNSNNNNNNNNSNSNNNNIN), 1077–1105 (GGSNNNNNNNNNNSNNNKDKIDSNNKDKD), 1173–1220 (NTSS…SDHR), 1583–1613 (NNNSGNNNSGNNINNNNNNNNNNTNLNNNEN), 1831–1859 (QQQQQQSQQSLQLPPSPSISNAGSSSSVV), 1921–2009 (PQKT…TLNN), and 2029–2062 (KSTLTSSSSSSPSSNNNNGNSNNNSNNNNNNNKN). The BEACH 1 domain maps to 229 to 491 (MTFRKAPSSV…QDLFRKGSNY (263 aa)). Positions 1079-1092 (SNNNNNNNNNNSNN) are enriched in low complexity. Over residues 1093–1105 (NKDKIDSNNKDKD) the composition is skewed to basic and acidic residues. Composition is skewed to low complexity over residues 1185-1194 (PLLTSTKSMS), 1583-1611 (NNNSGNNNSGNNINNNNNNNNNNTNLNNN), 1831-1857 (QQQQQQSQQSLQLPPSPSISNAGSSSS), 1926-1980 (QNQH…SFSN), 1993-2006 (NIITTTTTTTTTST), and 2034-2062 (SSSSSSPSSNNNNGNSNNNSNNNNNNNKN). Residues 2060-2162 (NKNIKLEFST…ICAQILKLIG (103 aa)) enclose the BEACH-type PH domain. 2 consecutive BEACH domains span residues 2202-2492 (TPQQ…HPQR) and 2628-2785 (NSRV…IYSN). WD repeat units lie at residues 2658 to 2710 (NHKS…SDHH) and 2720 to 2761 (GHNF…KSIQ). Disordered regions lie at residues 2798–2820 (SATTTTTTRDDESSSSSLSSSNT) and 2915–2934 (PSTSVSGDSNSNNNNNNNGN). Composition is skewed to low complexity over residues 2811–2820 (SSSSLSSSNT) and 2924–2934 (NSNNNNNNNGN).

The sequence is that of BEACH domain-containing protein lvsD (lvsD) from Dictyostelium discoideum (Social amoeba).